The primary structure comprises 91 residues: Small ribosomal subunit protein uS19 (91 aa).

The tract at residues G72 to K91 is disordered. Residues G82–K91 show a composition bias toward basic and acidic residues.

This sequence belongs to the universal ribosomal protein uS19 family.

Protein S19 forms a complex with S13 that binds strongly to the 16S ribosomal RNA. This Spiroplasma kunkelii protein is Small ribosomal subunit protein uS19.